The chain runs to 208 residues: Small ribosomal subunit protein uS4 (208 aa).

In terms of domain architecture, S4 RNA-binding spans 98–159 (RRLDNVAYRL…KSRKVAAISE (62 aa)).

Belongs to the universal ribosomal protein uS4 family. In terms of assembly, part of the 30S ribosomal subunit. Contacts protein S5. The interaction surface between S4 and S5 is involved in control of translational fidelity.

Its function is as follows. One of the primary rRNA binding proteins, it binds directly to 16S rRNA where it nucleates assembly of the body of the 30S subunit. Functionally, with S5 and S12 plays an important role in translational accuracy. In Citrifermentans bemidjiense (strain ATCC BAA-1014 / DSM 16622 / JCM 12645 / Bem) (Geobacter bemidjiensis), this protein is Small ribosomal subunit protein uS4.